Consider the following 1527-residue polypeptide: Lysophospholipase nte1 (1527 aa).

At Met1–Gly69 the chain is on the cytoplasmic side. A helical membrane pass occupies residues Trp70–Ile90. Residues Thr91 to Thr112 are Lumenal-facing. A helical transmembrane segment spans residues Met113–Ile133. Residues Arg134–Ile1527 lie on the Cytoplasmic side of the membrane. Disordered stretches follow at residues Ala240 to Val259, Leu299 to Ile387, Glu576 to Arg596, and Ala750 to Ser785. The segment covering His355 to Thr373 has biased composition (basic and acidic residues). A nucleoside 3',5'-cyclic phosphate contacts are provided by residues Gly685–Val804 and Arg846–Arg966. The span at Arg761–Ser771 shows a compositional bias: low complexity. The 165-residue stretch at Leu1224–Lys1388 folds into the PNPLA domain. The GXGXXG signature appears at Gly1228–Gly1233. Positions Gly1255–Gly1259 match the GXSXG motif. The active-site Nucleophile is the Ser1257. The Proton acceptor role is filled by Asp1375. A DGA/G motif is present at residues Asp1375–Gly1377.

It belongs to the NTE family.

The protein resides in the endoplasmic reticulum membrane. The catalysed reaction is a 1-acyl-sn-glycero-3-phosphocholine + H2O = sn-glycerol 3-phosphocholine + a fatty acid + H(+). Its activity is regulated as follows. Inhibited by organophosphorus esters. Functionally, intracellular phospholipase B that catalyzes the double deacylation of phosphatidylcholine (PC) to glycerophosphocholine (GroPCho). Plays an important role in membrane lipid homeostasis. Responsible for the rapid PC turnover in response to inositol, elevated temperatures, or when choline is present in the growth medium. This is Lysophospholipase nte1 (nte1) from Aspergillus terreus (strain NIH 2624 / FGSC A1156).